Reading from the N-terminus, the 345-residue chain is Short-wave-sensitive opsin 1 (345 aa).

Over 1–30 the chain is Extracellular; that stretch reads MSEEEFYLFKNISSVGPWDGPQYHIAPVWA. N-linked (GlcNAc...) asparagine glycosylation is present at Asn11. Residues 31–55 form a helical membrane-spanning segment; sequence FYLQAAFMGTVFLIGFPLNAMVLVA. Over 56 to 67 the chain is Cytoplasmic; sequence TLRYKKLRQPLN. The helical transmembrane segment at 68–93 threads the bilayer; sequence YILVNVSFGGFLLCIFSVFPVFVASC. Topologically, residues 94-107 are extracellular; sequence NGYFVFGRHVCALE. Cys104 and Cys181 form a disulfide bridge. The helical transmembrane segment at 108-127 threads the bilayer; it reads GFLGTVAGLVTGWSLAFLAF. Topologically, residues 128 to 146 are cytoplasmic; that stretch reads ERYIVICKPFGNFRFSSKH. Residues 147–170 traverse the membrane as a helical segment; the sequence is ALTVVLATWTIGIGVSIPPFFGWS. The Extracellular portion of the chain corresponds to 171–196; that stretch reads RFIPEGLQCSCGPDWYTVGTKYRSES. The helical transmembrane segment at 197-224 threads the bilayer; that stretch reads YTWFLFIFCFIVPLSLICFSYTQLLRAL. The Cytoplasmic portion of the chain corresponds to 225–246; sequence KAVAAQQQESATTQKAEREVSR. The chain crosses the membrane as a helical span at residues 247-270; it reads MVVVMVGSFCVCYVPYAAFAMYMV. The Extracellular segment spans residues 271 to 278; it reads NNRNHGLD. A helical membrane pass occupies residues 279 to 303; the sequence is LRLVTIPSFFSKSACIYNPIIYCFM. An N6-(retinylidene)lysine modification is found at Lys290. Residues 304–345 are Cytoplasmic-facing; that stretch reads NKQFQACIMKMVCGKAMTDESDTCSSQKTEVSTVSSTQVGPN.

The protein belongs to the G-protein coupled receptor 1 family. Opsin subfamily. Post-translationally, phosphorylated on some or all of the serine and threonine residues present in the C-terminal region. In terms of tissue distribution, the three color pigments are found in the cone photoreceptor cells. Expressed throughout the epidermis and dermis, primarily in the stratum granulosum in the facial and abdominal skin (at protein level). Expressed in dermal fibroblasts (at protein level). Expressed in melanocytes (at protein level).

It is found in the cell membrane. Its subcellular location is the photoreceptor inner segment. It localises to the cell projection. The protein resides in the cilium. The protein localises to the photoreceptor outer segment. It is found in the cytoplasm. Its subcellular location is the perinuclear region. In terms of biological role, visual pigments are the light-absorbing molecules that mediate vision. They consist of an apoprotein, opsin, covalently linked to cis-retinal. Required for the maintenance of cone outer segment organization in the ventral retina, but not essential for the maintenance of functioning cone photoreceptors. Involved in ensuring correct abundance and localization of retinal membrane proteins. May increase spectral sensitivity in dim light. The sequence is that of Short-wave-sensitive opsin 1 (OPN1SW) from Homo sapiens (Human).